Reading from the N-terminus, the 204-residue chain is Urease accessory protein UreG (204 aa).

12–19 contacts GTP; it reads GPVGSGKT.

This sequence belongs to the SIMIBI class G3E GTPase family. UreG subfamily. Homodimer. UreD, UreF and UreG form a complex that acts as a GTP-hydrolysis-dependent molecular chaperone, activating the urease apoprotein by helping to assemble the nickel containing metallocenter of UreC. The UreE protein probably delivers the nickel.

Its subcellular location is the cytoplasm. In terms of biological role, facilitates the functional incorporation of the urease nickel metallocenter. This process requires GTP hydrolysis, probably effectuated by UreG. In Streptococcus salivarius (strain 57.I), this protein is Urease accessory protein UreG.